Here is a 155-residue protein sequence, read N- to C-terminus: Nascent polypeptide-associated complex subunit beta (155 aa).

Disordered stretches follow at residues 1–35 (MDQA…SGAD) and 116–155 (LAES…SNVE). Residues 20-30 (TPRRKVKKVHK) are compositionally biased toward basic residues. The 66-residue stretch at 33–98 (GADDKKLQAT…GEEKELTELV (66 aa)) folds into the NAC-A/B domain. A compositionally biased stretch (acidic residues) spans 136 to 155 (DEEDDIPDLVEGENFESNVE).

The protein belongs to the NAC-beta family. As to quaternary structure, part of the nascent polypeptide-associated complex (NAC), consisting of egd2 and egd1. NAC associates with ribosomes via egd1.

It localises to the cytoplasm. The protein localises to the nucleus. Its function is as follows. Component of the nascent polypeptide-associated complex (NAC), a dynamic component of the ribosomal exit tunnel, protecting the emerging polypeptides from interaction with other cytoplasmic proteins to ensure appropriate nascent protein targeting. The NAC complex also promotes mitochondrial protein import by enhancing productive ribosome interactions with the outer mitochondrial membrane and blocks the inappropriate interaction of ribosomes translating non-secretory nascent polypeptides with translocation sites in the membrane of the endoplasmic reticulum. EGD1 may act as a transcription factor that exert a negative effect on the expression of several genes that are transcribed by RNA polymerase II. This chain is Nascent polypeptide-associated complex subunit beta (egd1), found in Aspergillus niger (strain ATCC MYA-4892 / CBS 513.88 / FGSC A1513).